A 235-amino-acid chain; its full sequence is 15,16-dihydrobiliverdin:ferredoxin oxidoreductase (235 aa).

The protein belongs to the HY2 family.

It carries out the reaction 15,16-dihydrobiliverdin + oxidized 2[4Fe-4S]-[ferredoxin] = biliverdin IXalpha + reduced 2[4Fe-4S]-[ferredoxin] + 2 H(+). Catalyzes the two-electron reduction of biliverdin IX-alpha at the C15 methine bridge. This is 15,16-dihydrobiliverdin:ferredoxin oxidoreductase (pebA) from Parasynechococcus marenigrum (strain WH8102).